We begin with the raw amino-acid sequence, 134 residues long: 6,7-dimethyl-8-ribityllumazine synthase (134 aa).

5-amino-6-(D-ribitylamino)uracil is bound by residues F12, V44–D46, and S68–I70. A (2S)-2-hydroxy-3-oxobutyl phosphate-binding site is contributed by E73–T74. The Proton donor role is filled by H76. L101 serves as a coordination point for 5-amino-6-(D-ribitylamino)uracil. Residue R116 participates in (2S)-2-hydroxy-3-oxobutyl phosphate binding.

The protein belongs to the DMRL synthase family.

It catalyses the reaction (2S)-2-hydroxy-3-oxobutyl phosphate + 5-amino-6-(D-ribitylamino)uracil = 6,7-dimethyl-8-(1-D-ribityl)lumazine + phosphate + 2 H2O + H(+). Its pathway is cofactor biosynthesis; riboflavin biosynthesis; riboflavin from 2-hydroxy-3-oxobutyl phosphate and 5-amino-6-(D-ribitylamino)uracil: step 1/2. Catalyzes the formation of 6,7-dimethyl-8-ribityllumazine by condensation of 5-amino-6-(D-ribitylamino)uracil with 3,4-dihydroxy-2-butanone 4-phosphate. This is the penultimate step in the biosynthesis of riboflavin. This chain is 6,7-dimethyl-8-ribityllumazine synthase, found in Methanosarcina acetivorans (strain ATCC 35395 / DSM 2834 / JCM 12185 / C2A).